Reading from the N-terminus, the 1413-residue chain is MKALLDLFKQVQQEEVFDAIKIGLASPDKIRSWSFGEVKKPETINYRTFKPERDGLFCAKIFGPIKDYECLCGKYKRLKHRGVICEKCGVEVTLAKVRRERMGHIELASPVAHIWFLKSLPSRLGMVLDMTLRDIERVLYFEAYVVIEPGMTPLKARQIMTEEDYYNKVEEYGDEFRAEMGAEGVRELLRAINIDEQVETLRTELKNTGSEAKIKKYAKRLKVLEAFQRSGIKPEWMILEVLPVLPPELRPLVPLDGGRFATSDLNDLYRRVINRNNRLKRLLELKAPEIIVRNEKRMLQEAVDSLLDNGRRGKAMTGANKRPLKSLADMIKGKGGRFRQNLLGKRVDYSGRSVIVVGPTLKLHQCGLPKLMALELFKPFIFNKLEVMGVATTIKAAKKEVENQTPVVWDILEEVIREHPVMLNRAPTLHRLGIQAFEPVLIEGKAIQLHPLVCAAFNADFDGDQMAVHVPLSLEAQMEARTLMLASNNVLFPANGDPSIVPSQDIVLGLYYATREAVNAKGEGLSFTGVSEVIRAYENKEVELASRVNVRITEMVRNEDTSEGAPQFVPKISLYATTVGRAILSEILPHGLPFSVLNKPLKKKEISRLINTAFRKCGLRATVVFADQLMQSGFRLATRAGISICVDDMLVPPQKETIVGDAAKKVKEYDRQYMSGLVTAQERYNNVVDIWSATSEAVGKAMMEQLSTEPVIDRDGNETRQESFNSIYMMADSGARGSAVQIRQLAGMRGLMAKPDGSIIETPITANFREGLNVLQYFISTHGARKGLADTALKTANSGYLTRRLVDVTQDLVVVEDDCGTSNGVAMKALVEGGEVVEALRDRILGRVAVADVVNPETQETLYESGTLLDETAVEEIERLGIDEVRVRTPLTCETRYGLCAACYGRDLGRGSLVNVGEAVGVIAAQSIGEPGTQLTMRTFHIGGAASRAAVASSVEAKSNGIVRFTATMRYVTNAKGEQIVISRSGEALITDDIGRERERHKIPYGATLLQLDGATIKAGTQLATWDPMTRPIITEYGGTVKFENVEEGVTVAKQIDDVTGLSTLVVIDVKRRGSQASKSVRPQVKLLDANGEEVKIPGTEHAVQIGFQVGALITVKDGQQVQVGEVLARIPTEAQKTRDITGGLPRVAELFEARSPKDAGILAEVTGTTSFGKDTKGKQRLVITDLEGNQHEFLIAKEKQVLVHDAQVVNKGEMIVDGPADPHDILRLQGIEALSRYIVDEVQDVYRLQGVKINDKHIEVIVRQMLRRVQITDNGDTRFIPGEQVERSDMLDENDRMIAEGKRPASYDNVLLGITKASLSTDSFISAASFQETTRVLTEAAIMGKRDDLRGLKENVIVGRLIPAGTGLAFHKARKAKEMSDRERFDQIAAEEAFDFGTPSAPAEEPQHPAAE.

4 residues coordinate Zn(2+): Cys70, Cys72, Cys85, and Cys88. Mg(2+) contacts are provided by Asp460, Asp462, and Asp464. Zn(2+) is bound by residues Cys819, Cys893, Cys900, and Cys903.

It belongs to the RNA polymerase beta' chain family. In terms of assembly, the RNAP catalytic core consists of 2 alpha, 1 beta, 1 beta' and 1 omega subunit. When a sigma factor is associated with the core the holoenzyme is formed, which can initiate transcription. The cofactor is Mg(2+). Requires Zn(2+) as cofactor.

It catalyses the reaction RNA(n) + a ribonucleoside 5'-triphosphate = RNA(n+1) + diphosphate. DNA-dependent RNA polymerase catalyzes the transcription of DNA into RNA using the four ribonucleoside triphosphates as substrates. This Burkholderia vietnamiensis (strain G4 / LMG 22486) (Burkholderia cepacia (strain R1808)) protein is DNA-directed RNA polymerase subunit beta'.